The primary structure comprises 453 residues: Zinc finger and BTB domain-containing protein 44 (453 aa).

K4 participates in a covalent cross-link: Glycyl lysine isopeptide (Lys-Gly) (interchain with G-Cter in SUMO2). Residues 31 to 98 (CDITIRVQDK…AYTATLSINT (68 aa)) form the BTB domain. S135 is subject to Phosphoserine. Positions 135–157 (SQPEKSLDAGQENSSNCNFTSRD) are disordered. The segment covering 145–157 (QENSSNCNFTSRD) has biased composition (polar residues). 6 positions are modified to phosphoserine: S159, S161, S165, S191, S194, and S199. T200 carries the phosphothreonine modification. The disordered stretch occupies residues 241–266 (QPEKAKQAENTRTLELPGPSEAGRRV). Residue K290 forms a Glycyl lysine isopeptide (Lys-Gly) (interchain with G-Cter in SUMO2) linkage. Disordered stretches follow at residues 295 to 324 (SDEEVHEEVSQPVSASQSSLSDQQTVPGSE) and 336 to 366 (SSSIGSVDEGVTEGLPTLQSTSSTNAHADDD). The segment covering 304 to 318 (SQPVSASQSSLSDQQ) has biased composition (low complexity). Over residues 352–361 (TLQSTSSTNA) the composition is skewed to polar residues. 2 consecutive C2H2-type zinc fingers follow at residues 399–421 (FQCPTCGVRFTRIQNLKQHMLIH) and 427–449 (FQCDCCGKKFTRAYSLKMHRLKH).

It localises to the nucleus. The polypeptide is Zinc finger and BTB domain-containing protein 44 (Zbtb44) (Mus musculus (Mouse)).